The chain runs to 320 residues: N-acetylneuraminate lyase (320 aa).

Aceneuramate is bound by residues Thr-51 and Thr-52. Tyr-143 functions as the Proton donor in the catalytic mechanism. Catalysis depends on Lys-173, which acts as the Schiff-base intermediate with substrate. Aceneuramate-binding residues include Ser-175, Gly-199, Asp-201, Glu-202, and Ser-218.

It belongs to the DapA family. NanA subfamily. As to quaternary structure, homotetramer. Isoform 2 is expressed in placenta, liver, kidney, pancreas, spleen, thymus, ovary, small intestine and peripheral blood leukocyte.

The protein localises to the cytoplasm. It carries out the reaction aceneuramate = aldehydo-N-acetyl-D-mannosamine + pyruvate. It functions in the pathway amino-sugar metabolism; N-acetylneuraminate degradation. Functionally, catalyzes the cleavage of N-acetylneuraminic acid (sialic acid) to form pyruvate and N-acetylmannosamine via a Schiff base intermediate. It prevents sialic acids from being recycled and returning to the cell surface. Involved in the N-glycolylneuraminic acid (Neu5Gc) degradation pathway. Although human is not able to catalyze formation of Neu5Gc due to the inactive CMAHP enzyme, Neu5Gc is present in food and must be degraded. This chain is N-acetylneuraminate lyase, found in Homo sapiens (Human).